Reading from the N-terminus, the 295-residue chain is Protoheme IX farnesyltransferase (295 aa).

9 consecutive transmembrane segments (helical) span residues 30 to 50, 51 to 71, 93 to 115, 119 to 136, 148 to 168, 175 to 195, 219 to 239, 244 to 264, and 275 to 295; these read LVVLTGVTGIIIAPGNIHPLI, AVISTLCIALGSGAAGAINMW, ISRSSALEVGLVLSFISVTIMMI, YISGILLAISIGFYIYVY, IVIGGAAGALPPIIGWTSVTG, LVLFLIIFMWTPPHFWALSLL, IHILVYSILLFPITLLPGLFL, LYEITAIPLGLMFVVQAFQVF, and MFTYSIIYLFILFTCIMLSSF.

Belongs to the UbiA prenyltransferase family. Protoheme IX farnesyltransferase subfamily.

It localises to the cell inner membrane. It carries out the reaction heme b + (2E,6E)-farnesyl diphosphate + H2O = Fe(II)-heme o + diphosphate. Its pathway is porphyrin-containing compound metabolism; heme O biosynthesis; heme O from protoheme: step 1/1. Functionally, converts heme B (protoheme IX) to heme O by substitution of the vinyl group on carbon 2 of heme B porphyrin ring with a hydroxyethyl farnesyl side group. This is Protoheme IX farnesyltransferase from Ehrlichia ruminantium (strain Gardel).